A 210-amino-acid chain; its full sequence is LexA repressor (210 aa).

Positions 31–51 (RVEISKELGFRSPNAAEEHLK) form a DNA-binding region, H-T-H motif. Residues S126 and K163 each act as for autocatalytic cleavage activity in the active site.

Belongs to the peptidase S24 family. As to quaternary structure, homodimer.

The catalysed reaction is Hydrolysis of Ala-|-Gly bond in repressor LexA.. Functionally, represses a number of genes involved in the response to DNA damage (SOS response), including recA and lexA. In the presence of single-stranded DNA, RecA interacts with LexA causing an autocatalytic cleavage which disrupts the DNA-binding part of LexA, leading to derepression of the SOS regulon and eventually DNA repair. This is LexA repressor from Histophilus somni (strain 129Pt) (Haemophilus somnus).